Here is a 99-residue protein sequence, read N- to C-terminus: Protein RnfH (99 aa).

This sequence belongs to the UPF0125 (RnfH) family.

The sequence is that of Protein RnfH from Buchnera aphidicola subsp. Acyrthosiphon pisum (strain 5A).